The primary structure comprises 291 residues: m-AAA protease-interacting protein 1, mitochondrial (291 aa).

The transit peptide at 1-96 (MALAARLLPL…SLPASPIRSY (96 aa)) directs the protein to the mitochondrion.

In terms of assembly, interacts with AFG3L2. Interacts with SPG7. Interacts with SMDT1/EMRE (via the N-terminal transit peptide); interaction is direct and takes place before maturation of SMDT1/EMRE.

The protein resides in the mitochondrion matrix. In terms of biological role, promotes sorting of SMDT1/EMRE in mitochondria by ensuring its maturation. Interacts with the transit peptide region of SMDT1/EMRE precursor protein in the mitochondrial matrix, leading to protect it against protein degradation by YME1L1, thereby ensuring SMDT1/EMRE maturation by the mitochondrial processing peptidase (PMPCA and PMPCB). The sequence is that of m-AAA protease-interacting protein 1, mitochondrial from Rattus norvegicus (Rat).